Consider the following 357-residue polypeptide: UDP-arabinopyranose mutase 1 (357 aa).

Val-2 carries the post-translational modification N-acetylvaline. The DXD motif motif lies at 110–112 (DDD). A glycan (N-linked (Glc...) arginine) is linked at Arg-158.

It belongs to the RGP family. As to quaternary structure, heteromers with RGP2, RGP3, RGP4 and RGP5. It depends on Mn(2+) as a cofactor. Mg(2+) serves as cofactor. Post-translationally, reversibly glycosylated in vitro by UDP-glucose, UDP-xylose and UDP-galactose, but not UDP-mannose. In terms of tissue distribution, predominantly expressed in shoot and root apical meristems. Expressed in epidermal cells of leaves, inflorescence stems and seed coat. Expressed in pollen.

It localises to the cytoplasm. Its subcellular location is the cytosol. The protein resides in the golgi apparatus. It carries out the reaction UDP-beta-L-arabinofuranose = UDP-beta-L-arabinopyranose. Functionally, UDP-L-arabinose mutase involved in the biosynthesis of cell wall non-cellulosic polysaccharides. Catalyzes the interconvertion of UDP-L-arabinopyranose (UDP-Arap) and UDP-L-arabinofuranose (UDP-Araf) in vitro. Preferentially catalyzes the formation of UDP-Arap from UDP-Araf. At thermodynamic equilibrium in vitro the ratio of the pyranose form over the furanose form is 95:5. Is not active on other UDP-sugars (UDP-Gal, UDP-Xyl, UDP-Glc, GDP-Man and GDP-Fuc). Functions redundantly with RGP2 and is essential for proper cell walls and pollen development. Probably involved in the formation of the pectocellulosic cell wall layer intine. Is probably active as heteromer in vivo. The sequence is that of UDP-arabinopyranose mutase 1 from Arabidopsis thaliana (Mouse-ear cress).